Consider the following 726-residue polypeptide: MAAPGARSCNLSGLLPAQTSLEYALLDAVTQEEKDGLVYQYLQKVDGWEQDLLVPEFPEGLEWLNTEEPISVYKDLCGKVVILDFFTYCCINCIHLLPDLHALEHTYSDKDGLLIVGVHSAKFPNEKVLDNIRSAVLRYNITHPVVNDADASLWQELEVSCWPTLIILGPRGNMLFSLIGEGHKEKLFLYTSIALKYYKDRGQIRANKIGIKLYKDSLPPSPLLFPGKITVDHVSNRLVIADTGHHRILVVWKNGQIQYSIGGPNPGRKDGIFSESSFNSPQGVAIMNNIIYVADTENHLIRKIDLEAEMVSTVAGIGIQGTDKEGGAKGDEQPISSPWDVVFGRSGPEVQRDNILWIAMAGTHQIWALLLDCGRLPKKNELKKGTCLRFAGSGNEENRNNAYPHKAGFAQPSGLSLASEGPWSCLFVADSESSTVRTVSLKDGAVKHLVGGERDPMNLFAFGDVDGVGINARLQHPLGVTWDQKRNLLYVADSYNHKIKVVDPKTKNCTTLAGTGNASNMIGSSFTDSTFNEPGGLCIGENGQLLYVADTNNHQIKVLDLETKTVSVFPVFRSENAVVDGPCLAGKPKTLPKLPKSAPGIRLAPVAASPGQTLQFKLRLDLPSGTKLTEGASSCWFLSAEGNEWLLQGQIPSGEIESISNQPTISLQIPGDCLSLEAILSISVFLYYCSSDSSACMMKGILFSQPLQITDTQQDCIPPVELKYIF.

NHL repeat units lie at residues 212–254 (KLYK…VWKN), 265–307 (NPGR…IDLE), 335–369 (ISSP…IWAL), 409–439 (FAQP…VRTV), 461–505 (AFGD…VDPK), and 518–562 (ASNM…LDLE).

In terms of assembly, monomer.

The protein localises to the cytoplasm. Its subcellular location is the cytosol. Functionally, required for normal embryonic development. This is NHL repeat-containing protein 2 (NHLRC2) from Bos taurus (Bovine).